A 614-amino-acid polypeptide reads, in one-letter code: DNA mismatch repair protein MutL (614 aa).

Belongs to the DNA mismatch repair MutL/HexB family.

This protein is involved in the repair of mismatches in DNA. It is required for dam-dependent methyl-directed DNA mismatch repair. May act as a 'molecular matchmaker', a protein that promotes the formation of a stable complex between two or more DNA-binding proteins in an ATP-dependent manner without itself being part of a final effector complex. This is DNA mismatch repair protein MutL from Chlorobium phaeovibrioides (strain DSM 265 / 1930) (Prosthecochloris vibrioformis (strain DSM 265)).